The chain runs to 114 residues: Ribonuclease P protein component (114 aa).

It belongs to the RnpA family. As to quaternary structure, consists of a catalytic RNA component (M1 or rnpB) and a protein subunit.

The enzyme catalyses Endonucleolytic cleavage of RNA, removing 5'-extranucleotides from tRNA precursor.. Functionally, RNaseP catalyzes the removal of the 5'-leader sequence from pre-tRNA to produce the mature 5'-terminus. It can also cleave other RNA substrates such as 4.5S RNA. The protein component plays an auxiliary but essential role in vivo by binding to the 5'-leader sequence and broadening the substrate specificity of the ribozyme. This chain is Ribonuclease P protein component, found in Alkaliphilus oremlandii (strain OhILAs) (Clostridium oremlandii (strain OhILAs)).